The chain runs to 314 residues: Transmembrane protein 178B (314 aa).

The signal sequence occupies residues 1–24; it reads MRLLAGAGLCLALAALALLAVALS. The interval 32–83 is disordered; it reads DARRHRDRCRKPGGKRNDPGYMYTPGQHLPLRGEPPSSRIRSPRGGEPGGVR. Residues 36-45 are compositionally biased toward basic residues; it reads HRDRCRKPGG. A run of 3 helical transmembrane segments spans residues 194–214, 228–248, and 274–294; these read AGFI…GVLG, LLFL…VAGI, and MFCA…CTLA.

It belongs to the TMEM178 family.

It localises to the membrane. This chain is Transmembrane protein 178B (tmem178b), found in Xenopus tropicalis (Western clawed frog).